The sequence spans 104 residues: Intracellular chorismate mutase (104 aa).

Positions 23-104 (AVPEIDDLRR…LRLGRGRLGY (82 aa)) constitute a Chorismate mutase domain. Chorismate contacts are provided by Arg-59, Val-68, and Glu-72.

In terms of assembly, homodimer. Probably interacts with AroG (MSMEG_4244).

It is found in the cytoplasm. It catalyses the reaction chorismate = prephenate. It functions in the pathway metabolic intermediate biosynthesis; prephenate biosynthesis; prephenate from chorismate: step 1/1. The formation of the complex with AroG activates the chorismate mutase activity. In terms of biological role, catalyzes the Claisen rearrangement of chorismate to prephenate. Probably involved in the aromatic amino acid biosynthesis. In Mycolicibacterium smegmatis (strain ATCC 700084 / mc(2)155) (Mycobacterium smegmatis), this protein is Intracellular chorismate mutase.